Consider the following 208-residue polypeptide: 3-demethoxyubiquinol 3-hydroxylase (208 aa).

Residues Glu-57, Glu-87, His-90, Glu-139, Glu-171, and His-174 each contribute to the Fe cation site.

The protein belongs to the COQ7 family. It depends on Fe cation as a cofactor.

The protein resides in the cell membrane. The catalysed reaction is a 5-methoxy-2-methyl-3-(all-trans-polyprenyl)benzene-1,4-diol + AH2 + O2 = a 3-demethylubiquinol + A + H2O. It functions in the pathway cofactor biosynthesis; ubiquinone biosynthesis. Its function is as follows. Catalyzes the hydroxylation of 2-nonaprenyl-3-methyl-6-methoxy-1,4-benzoquinol during ubiquinone biosynthesis. In Burkholderia pseudomallei (strain 1106a), this protein is 3-demethoxyubiquinol 3-hydroxylase.